A 31-amino-acid chain; its full sequence is Dermaseptin-7.1TR (31 aa).

Gln31 is subject to Glutamine amide.

Expressed by the skin glands.

It is found in the secreted. In terms of biological role, has antimicrobial activity. This chain is Dermaseptin-7.1TR, found in Phyllomedusa trinitatis (Trinidad leaf frog).